A 270-amino-acid chain; its full sequence is tRNA pseudouridine synthase A (270 aa).

The active-site Nucleophile is the Asp52. Tyr110 is a substrate binding site.

The protein belongs to the tRNA pseudouridine synthase TruA family. In terms of assembly, homodimer.

It carries out the reaction uridine(38/39/40) in tRNA = pseudouridine(38/39/40) in tRNA. Formation of pseudouridine at positions 38, 39 and 40 in the anticodon stem and loop of transfer RNAs. In Roseiflexus castenholzii (strain DSM 13941 / HLO8), this protein is tRNA pseudouridine synthase A.